We begin with the raw amino-acid sequence, 362 residues long: Type-2 angiotensin II receptor (362 aa).

Over 1 to 44 the chain is Extracellular; the sequence is MKANFSLATISKNITSSLHVGFVNISSNESTFNCSHKPSDKHLD. N-linked (GlcNAc...) asparagine glycans are attached at residues asparagine 4, asparagine 13, asparagine 24, asparagine 28, and asparagine 33. 2 disulfides stabilise this stretch: cysteine 34–cysteine 289 and cysteine 116–cysteine 194. A helical transmembrane segment spans residues 45–69; sequence AIPVLYYIIFGVGFLVNTIVVTLFC. The Cytoplasmic segment spans residues 70–79; sequence CQKGPKKVSS. A helical membrane pass occupies residues 80-103; it reads IYIFNLAVADLLLLATLPLWATYY. Positions 102 and 103 each coordinate angiotensin II. Residues 104-113 lie on the Extracellular side of the membrane; it reads SHRYDWIFGP. A helical transmembrane segment spans residues 114–139; sequence VMCKVFGSFLTLNMFASIFFITCMSV. Residues 140-158 are Cytoplasmic-facing; sequence DRYQSVIYPFLSQRRNPWQ. A helical transmembrane segment spans residues 159–180; sequence ASYIVPLVWCMACLSSLPTFYF. The angiotensin II site is built by arginine 181, tyrosine 203, and lysine 214. Residues 181 to 205 lie on the Extracellular side of the membrane; it reads RDVRTIEYLGVNACIMAFPPEKYAQ. A helical transmembrane segment spans residues 206 to 231; that stretch reads WSAGIALMKNILGFIIPLIFIATCYF. The Cytoplasmic portion of the chain corresponds to 232 to 256; that stretch reads GIRKHLLKTNSYGKNRITRDQVLKM. Residues 257–280 traverse the membrane as a helical segment; the sequence is AAAVVLAFIICWLPFHVLTFLDAL. An angiotensin II-binding site is contributed by aspartate 278. The Extracellular portion of the chain corresponds to 281 to 293; sequence AWMGVINSCEVIA. The helical transmembrane segment at 294–319 threads the bilayer; the sequence is VIDLALPFAILLGFTNSCINPFLYCF. Aspartate 296 contributes to the angiotensin II binding site. The Cytoplasmic portion of the chain corresponds to 320 to 362; the sequence is VGNRFQQKLRRVFRVPITWLQGKRENGSCGKSSSFREMETFVS. The interval 323–332 is helix VIII; it reads RFQQKLRRVF.

The protein belongs to the G-protein coupled receptor 1 family. In terms of assembly, interacts with MTUS1.

It is found in the cell membrane. Receptor for angiotensin II, a vasoconstricting peptide. Signals primarily via a non-canonical G-protein- and beta-arrestin independent pathways. Cooperates with MTUS1 to inhibit ERK2 activation and cell proliferation. This Ovis aries (Sheep) protein is Type-2 angiotensin II receptor (AGTR2).